We begin with the raw amino-acid sequence, 452 residues long: Chromosomal replication initiator protein DnaA (452 aa).

The interval 1–72 is domain I, interacts with DnaA modulators; it reads MPDMLTLWTD…LVEYAYQAAH (72 aa). Residues 72 to 114 form a domain II region; that stretch reads HEDIQPVLILENERQQQATLKAKTAPVAAGEPVEPTPTFMKET. The domain III, AAA+ region stretch occupies residues 115–331; it reads ALNSRYTFDT…GALARVQAYS (217 aa). Glycine 159, glycine 161, lysine 162, and threonine 163 together coordinate ATP. Positions 332-452 are domain IV, binds dsDNA; the sequence is QLMHQPIATD…IDSLKDDLRR (121 aa).

This sequence belongs to the DnaA family. In terms of assembly, oligomerizes as a right-handed, spiral filament on DNA at oriC.

It localises to the cytoplasm. Plays an essential role in the initiation and regulation of chromosomal replication. ATP-DnaA binds to the origin of replication (oriC) to initiate formation of the DNA replication initiation complex once per cell cycle. Binds the DnaA box (a 9 base pair repeat at the origin) and separates the double-stranded (ds)DNA. Forms a right-handed helical filament on oriC DNA; dsDNA binds to the exterior of the filament while single-stranded (ss)DNA is stabiized in the filament's interior. The ATP-DnaA-oriC complex binds and stabilizes one strand of the AT-rich DNA unwinding element (DUE), permitting loading of DNA polymerase. After initiation quickly degrades to an ADP-DnaA complex that is not apt for DNA replication. Binds acidic phospholipids. The sequence is that of Chromosomal replication initiator protein DnaA from Levilactobacillus brevis (strain ATCC 367 / BCRC 12310 / CIP 105137 / JCM 1170 / LMG 11437 / NCIMB 947 / NCTC 947) (Lactobacillus brevis).